Consider the following 151-residue polypeptide: Methylglyoxal synthase (151 aa).

One can recognise an MGS-like domain in the interval 6 to 151 (RTMPAHKHVA…DYDAYLAERT (146 aa)). Substrate-binding positions include His19, Lys23, 45-48 (TGTT), and 65-66 (SG). The active-site Proton donor/acceptor is Asp71. Residue His98 participates in substrate binding.

Belongs to the methylglyoxal synthase family.

The enzyme catalyses dihydroxyacetone phosphate = methylglyoxal + phosphate. Functionally, catalyzes the formation of methylglyoxal from dihydroxyacetone phosphate. In Vibrio campbellii (strain ATCC BAA-1116), this protein is Methylglyoxal synthase.